A 408-amino-acid polypeptide reads, in one-letter code: Arginine deiminase (408 aa).

C397 serves as the catalytic Amidino-cysteine intermediate.

This sequence belongs to the arginine deiminase family.

It localises to the cytoplasm. The enzyme catalyses L-arginine + H2O = L-citrulline + NH4(+). The protein operates within amino-acid degradation; L-arginine degradation via ADI pathway; carbamoyl phosphate from L-arginine: step 1/2. This Listeria innocua serovar 6a (strain ATCC BAA-680 / CLIP 11262) protein is Arginine deiminase.